Here is a 436-residue protein sequence, read N- to C-terminus: UDP-N-acetylglucosamine 1-carboxyvinyltransferase 1 (436 aa).

Residue Lys-22 to Asn-23 participates in phosphoenolpyruvate binding. Arg-93 lines the UDP-N-acetyl-alpha-D-glucosamine pocket. Cys-117 serves as the catalytic Proton donor. Cys-117 carries the post-translational modification 2-(S-cysteinyl)pyruvic acid O-phosphothioketal. Residues Arg-122–Gln-126, Asp-306, and Val-328 each bind UDP-N-acetyl-alpha-D-glucosamine.

Belongs to the EPSP synthase family. MurA subfamily.

It localises to the cytoplasm. It catalyses the reaction phosphoenolpyruvate + UDP-N-acetyl-alpha-D-glucosamine = UDP-N-acetyl-3-O-(1-carboxyvinyl)-alpha-D-glucosamine + phosphate. Its pathway is cell wall biogenesis; peptidoglycan biosynthesis. In terms of biological role, cell wall formation. Adds enolpyruvyl to UDP-N-acetylglucosamine. This chain is UDP-N-acetylglucosamine 1-carboxyvinyltransferase 1, found in Bacillus licheniformis (strain ATCC 14580 / DSM 13 / JCM 2505 / CCUG 7422 / NBRC 12200 / NCIMB 9375 / NCTC 10341 / NRRL NRS-1264 / Gibson 46).